The sequence spans 100 residues: Small ribosomal subunit protein uS14c (100 aa).

Belongs to the universal ribosomal protein uS14 family. As to quaternary structure, part of the 30S ribosomal subunit.

The protein localises to the plastid. It localises to the chloroplast. Functionally, binds 16S rRNA, required for the assembly of 30S particles. The chain is Small ribosomal subunit protein uS14c from Liriodendron tulipifera (Tuliptree).